A 668-amino-acid polypeptide reads, in one-letter code: tRNA 5-methylaminomethyl-2-thiouridine biosynthesis bifunctional protein MnmC (668 aa).

Residues 1–245 form a tRNA (mnm(5)s(2)U34)-methyltransferase region; the sequence is MKHYSIQPAN…KREMLCGVME (245 aa). The interval 270–668 is FAD-dependent cmnm(5)s(2)U34 oxidoreductase; that stretch reads IGGGIASALL…LLKGKAVKAG (399 aa).

The protein in the N-terminal section; belongs to the methyltransferase superfamily. tRNA (mnm(5)s(2)U34)-methyltransferase family. It in the C-terminal section; belongs to the DAO family. FAD is required as a cofactor.

It localises to the cytoplasm. The enzyme catalyses 5-aminomethyl-2-thiouridine(34) in tRNA + S-adenosyl-L-methionine = 5-methylaminomethyl-2-thiouridine(34) in tRNA + S-adenosyl-L-homocysteine + H(+). Catalyzes the last two steps in the biosynthesis of 5-methylaminomethyl-2-thiouridine (mnm(5)s(2)U) at the wobble position (U34) in tRNA. Catalyzes the FAD-dependent demodification of cmnm(5)s(2)U34 to nm(5)s(2)U34, followed by the transfer of a methyl group from S-adenosyl-L-methionine to nm(5)s(2)U34, to form mnm(5)s(2)U34. The sequence is that of tRNA 5-methylaminomethyl-2-thiouridine biosynthesis bifunctional protein MnmC from Escherichia coli (strain UTI89 / UPEC).